The following is a 222-amino-acid chain: Pleckstrin homology domain-containing family B member 2 (222 aa).

In terms of domain architecture, PH spans 2 to 109; it reads AFVKSGWLLR…WKFTLQDSRT (108 aa). Residue Lys20 coordinates a 1,2-diacyl-sn-glycero-3-phospho-L-serine.

It is found in the recycling endosome membrane. Functionally, involved in retrograde transport of recycling endosomes. In Homo sapiens (Human), this protein is Pleckstrin homology domain-containing family B member 2 (PLEKHB2).